The following is a 305-amino-acid chain: Ribonuclease BN (305 aa).

The Zn(2+) site is built by H64, H66, D68, H69, H141, D212, and H270. Catalysis depends on D68, which acts as the Proton acceptor.

The protein belongs to the RNase Z family. RNase BN subfamily. Homodimer. Zn(2+) is required as a cofactor.

In terms of biological role, zinc phosphodiesterase, which has both exoribonuclease and endoribonuclease activities. This chain is Ribonuclease BN, found in Salmonella agona (strain SL483).